A 117-amino-acid chain; its full sequence is Large ribosomal subunit protein bL20 (117 aa).

This sequence belongs to the bacterial ribosomal protein bL20 family.

Binds directly to 23S ribosomal RNA and is necessary for the in vitro assembly process of the 50S ribosomal subunit. It is not involved in the protein synthesizing functions of that subunit. This is Large ribosomal subunit protein bL20 from Vibrio atlanticus (strain LGP32) (Vibrio splendidus (strain Mel32)).